Here is a 548-residue protein sequence, read N- to C-terminus: Probable malate:quinone oxidoreductase (548 aa).

It belongs to the MQO family. FAD is required as a cofactor.

The enzyme catalyses (S)-malate + a quinone = a quinol + oxaloacetate. Its pathway is carbohydrate metabolism; tricarboxylic acid cycle; oxaloacetate from (S)-malate (quinone route): step 1/1. The chain is Probable malate:quinone oxidoreductase from Escherichia coli O6:H1 (strain CFT073 / ATCC 700928 / UPEC).